A 179-amino-acid chain; its full sequence is ATP synthase subunit delta (179 aa).

Belongs to the ATPase delta chain family. In terms of assembly, F-type ATPases have 2 components, F(1) - the catalytic core - and F(0) - the membrane proton channel. F(1) has five subunits: alpha(3), beta(3), gamma(1), delta(1), epsilon(1). F(0) has three main subunits: a(1), b(2) and c(10-14). The alpha and beta chains form an alternating ring which encloses part of the gamma chain. F(1) is attached to F(0) by a central stalk formed by the gamma and epsilon chains, while a peripheral stalk is formed by the delta and b chains.

Its subcellular location is the cell membrane. In terms of biological role, f(1)F(0) ATP synthase produces ATP from ADP in the presence of a proton or sodium gradient. F-type ATPases consist of two structural domains, F(1) containing the extramembraneous catalytic core and F(0) containing the membrane proton channel, linked together by a central stalk and a peripheral stalk. During catalysis, ATP synthesis in the catalytic domain of F(1) is coupled via a rotary mechanism of the central stalk subunits to proton translocation. Its function is as follows. This protein is part of the stalk that links CF(0) to CF(1). It either transmits conformational changes from CF(0) to CF(1) or is implicated in proton conduction. The polypeptide is ATP synthase subunit delta (Clostridium perfringens (strain ATCC 13124 / DSM 756 / JCM 1290 / NCIMB 6125 / NCTC 8237 / Type A)).